A 129-amino-acid polypeptide reads, in one-letter code: Thioredoxin-like 3-3 (129 aa).

Residues 1–10 show a composition bias toward basic and acidic residues; that stretch reads MEEGEAKKTG. The tract at residues 1–30 is disordered; sequence MEEGEAKKTGLEGTGLSLPGSSHGNLRSAG. The Thioredoxin domain maps to 7–129; the sequence is KKTGLEGTGL…RLHDRLWLHS (123 aa). Positions 19-30 are enriched in polar residues; it reads PGSSHGNLRSAG. Residues Cys58 and Cys61 each act as nucleophile in the active site. A disulfide bond links Cys58 and Cys61.

This sequence belongs to the thioredoxin family.

Its function is as follows. Probable thiol-disulfide oxidoreductase that may participate in various redox reactions. The protein is Thioredoxin-like 3-3 of Oryza sativa subsp. japonica (Rice).